A 468-amino-acid chain; its full sequence is ATP synthase subunit beta (468 aa).

Residue 155 to 162 coordinates ATP; the sequence is GGAGVGKT.

Belongs to the ATPase alpha/beta chains family. F-type ATPases have 2 components, CF(1) - the catalytic core - and CF(0) - the membrane proton channel. CF(1) has five subunits: alpha(3), beta(3), gamma(1), delta(1), epsilon(1). CF(0) has three main subunits: a(1), b(2) and c(9-12). The alpha and beta chains form an alternating ring which encloses part of the gamma chain. CF(1) is attached to CF(0) by a central stalk formed by the gamma and epsilon chains, while a peripheral stalk is formed by the delta and b chains.

Its subcellular location is the cell membrane. The catalysed reaction is ATP + H2O + 4 H(+)(in) = ADP + phosphate + 5 H(+)(out). Its function is as follows. Produces ATP from ADP in the presence of a proton gradient across the membrane. The catalytic sites are hosted primarily by the beta subunits. The chain is ATP synthase subunit beta from Bacillus cereus (strain ATCC 10987 / NRS 248).